The chain runs to 540 residues: Signal peptide peptidase-like 3 (540 aa).

The N-terminal stretch at 1 to 28 (MSSFDPPNHRYSALVLILLLLGFSVAAA) is a signal peptide. At 29–194 (DDVSWTEDSS…LYAPKRPAVD (166 aa)) the chain is on the lumenal side. The 75-residue stretch at 98-172 (SHLSSRLDGH…ISKSSGDALN (75 aa)) folds into the PA domain. N-linked (GlcNAc...) asparagine glycosylation is found at Asn155 and Asn172. A helical membrane pass occupies residues 195 to 215 (LTAGLLLLMAVGTVVVASLWS). The Cytoplasmic portion of the chain corresponds to 216–250 (ELTDPDQANESYSILAKDVSSAGTRKDDPEKEILD). The chain crosses the membrane as a helical span at residues 251-273 (ISVTGAVFFIVTASIFLLLLFYF). The Lumenal segment spans residues 274–276 (MSS). The chain crosses the membrane as a helical span at residues 277–299 (WFVWVLTIFFCIGGMQGMHNIIM). Over 300–321 (AVILRKCRHLARKSVKLPLLGT) the chain is Cytoplasmic. A helical membrane pass occupies residues 322–342 (MSVLSLLVNIVCLAFAVFWFI). At 343-347 (KRHTS) the chain is on the lumenal side. The helical transmembrane segment at 348–368 (YSWVGQDILGICLMITALQVV) threads the bilayer. Residues 369–377 (RLPNIKVAT) lie on the Cytoplasmic side of the membrane. The helical transmembrane segment at 378 to 398 (VLLCCAFVYDIFWVFISPLIF) threads the bilayer. Residue Asp387 is part of the active site. The Lumenal segment spans residues 399 to 429 (HESVMIVVAQGDSSTGESIPMLLRIPRFFDP). Residues 430 to 450 (WGGYDMIGFGDILFPGLLISF) traverse the membrane as a helical segment. Asp440 is an active-site residue. Over 451 to 466 (ASRYDKIKKRVISNGY) the chain is Cytoplasmic. Residues 467–487 (FLWLTIGYGIGLLLTYLGLYL) traverse the membrane as a helical segment. The Lumenal segment spans residues 488–492 (MDGHG). The chain crosses the membrane as a helical span at residues 493-513 (QPALLYIVPCTLGLAVILGLV). The PAL motif lies at 494–496 (PAL). The Cytoplasmic portion of the chain corresponds to 514–540 (RGELKELWNYGIEESESHTPEDPMPVA).

This sequence belongs to the peptidase A22B family. Glycosylated. In terms of tissue distribution, ubiquitous.

The protein localises to the endosome membrane. In terms of biological role, intramembrane-cleaving aspartic protease (I-CLiP) that cleaves type II membrane signal peptides in the hydrophobic plane of the membrane. This is Signal peptide peptidase-like 3 (SPPL3) from Arabidopsis thaliana (Mouse-ear cress).